We begin with the raw amino-acid sequence, 320 residues long: Cytochrome f (320 aa).

A signal peptide spans 1–35; the sequence is MQTRNTFSWIREEITRSISVSLMIYIITWASISSA. Tyr-36, Cys-56, Cys-59, and His-60 together coordinate heme. Residues 286–306 traverse the membrane as a helical segment; that stretch reads VQGLLFFLGSVVLAQIFLVLK.

The protein belongs to the cytochrome f family. In terms of assembly, the 4 large subunits of the cytochrome b6-f complex are cytochrome b6, subunit IV (17 kDa polypeptide, petD), cytochrome f and the Rieske protein, while the 4 small subunits are PetG, PetL, PetM and PetN. The complex functions as a dimer. Heme serves as cofactor.

It is found in the plastid. It localises to the chloroplast thylakoid membrane. Functionally, component of the cytochrome b6-f complex, which mediates electron transfer between photosystem II (PSII) and photosystem I (PSI), cyclic electron flow around PSI, and state transitions. The protein is Cytochrome f of Barbarea verna (Land cress).